A 352-amino-acid chain; its full sequence is Putative conjugal transfer protein MT3759 (352 aa).

Glycine 160–threonine 167 lines the ATP pocket.

Belongs to the GSP E family.

It localises to the cytoplasm. This chain is Putative conjugal transfer protein MT3759, found in Mycobacterium tuberculosis (strain CDC 1551 / Oshkosh).